The primary structure comprises 185 residues: MVRLISFLTLASTFAYAGEGHLGHSPGALIWKGLNILAFLGIVYYFGKKPISEAFNKFYNSIVESLVNAEREFMMAREELSKAKEELENAKKKAQEYEKLAIETAETEKKKILQHAQEVSERIKEKAKETIEIELNKAKKELALYGIQKAEEIAKDLLQKEFKKSKVQEKYIEAQLKLLEERKNA.

Residues 27-47 (GALIWKGLNILAFLGIVYYFG) form a helical membrane-spanning segment.

The protein belongs to the ATPase B chain family. In terms of assembly, F-type ATPases have 2 components, F(1) - the catalytic core - and F(0) - the membrane proton channel. F(1) has five subunits: alpha(3), beta(3), gamma(1), delta(1), epsilon(1). F(0) has three main subunits: a(1), b(2) and c(10-14). The alpha and beta chains form an alternating ring which encloses part of the gamma chain. F(1) is attached to F(0) by a central stalk formed by the gamma and epsilon chains, while a peripheral stalk is formed by the delta and b chains.

It is found in the cell inner membrane. Its function is as follows. F(1)F(0) ATP synthase produces ATP from ADP in the presence of a proton or sodium gradient. F-type ATPases consist of two structural domains, F(1) containing the extramembraneous catalytic core and F(0) containing the membrane proton channel, linked together by a central stalk and a peripheral stalk. During catalysis, ATP synthesis in the catalytic domain of F(1) is coupled via a rotary mechanism of the central stalk subunits to proton translocation. Component of the F(0) channel, it forms part of the peripheral stalk, linking F(1) to F(0). In Aquifex aeolicus (strain VF5), this protein is ATP synthase subunit b.